The chain runs to 189 residues: Peptidyl-tRNA hydrolase (189 aa).

Residue Tyr-15 coordinates tRNA. The active-site Proton acceptor is the His-20. TRNA contacts are provided by Phe-66, Asn-68, and Asn-114.

It belongs to the PTH family. Monomer.

The protein resides in the cytoplasm. The enzyme catalyses an N-acyl-L-alpha-aminoacyl-tRNA + H2O = an N-acyl-L-amino acid + a tRNA + H(+). In terms of biological role, hydrolyzes ribosome-free peptidyl-tRNAs (with 1 or more amino acids incorporated), which drop off the ribosome during protein synthesis, or as a result of ribosome stalling. Its function is as follows. Catalyzes the release of premature peptidyl moieties from peptidyl-tRNA molecules trapped in stalled 50S ribosomal subunits, and thus maintains levels of free tRNAs and 50S ribosomes. The polypeptide is Peptidyl-tRNA hydrolase (Streptococcus pneumoniae serotype 2 (strain D39 / NCTC 7466)).